The chain runs to 518 residues: DNA nucleotidylexotransferase (518 aa).

The short motif at 11–17 is the Nuclear localization signal element; that stretch reads FGKKRQK. In terms of domain architecture, BRCT spans 27-124; sequence IYEIKFHEFV…KPVDTKGKYQ (98 aa). The interval 153–518 is mediates interaction with DNTTIP2; it reads SQYACQRRTT…EYIQPSERNA (366 aa). The involved in DNA binding stretch occupies residues 260-264; that stretch reads VGLKT. Residues 335 to 340 and 344 to 347 contribute to the a 2'-deoxyribonucleoside 5'-triphosphate site; these read GFRRGK and HDVD. Aspartate 345, aspartate 347, and aspartate 442 together coordinate Mg(2+). Position 457 to 458 (457 to 458) interacts with a 2'-deoxyribonucleoside 5'-triphosphate; sequence GW.

It belongs to the DNA polymerase type-X family. Interacts with PRP19 and DNTTIP1. Interacts with TRERF1. Forms a ternary complex with DNTTIP2 and core histone. Released from this complex by PCNA. The cofactor is Mg(2+).

The protein localises to the nucleus. It catalyses the reaction DNA(n) + a 2'-deoxyribonucleoside 5'-triphosphate = DNA(n+1) + diphosphate. In terms of biological role, template-independent DNA polymerase which catalyzes the random addition of deoxynucleoside 5'-triphosphate to the 3'-end of a DNA initiator. One of the in vivo functions of this enzyme is the addition of nucleotides at the junction (N region) of rearranged Ig heavy chain and T-cell receptor gene segments during the maturation of B- and T-cells. This chain is DNA nucleotidylexotransferase (DNTT), found in Monodelphis domestica (Gray short-tailed opossum).